Here is a 258-residue protein sequence, read N- to C-terminus: Synaptosomal-associated protein 29 (258 aa).

The interval 1–43 (MSAYPRSYNPFDEDAEDEDARPAPWSDSRDLADGPGAPADRQQ) is disordered. S65, S77, and S114 each carry phosphoserine. A coiled-coil region spans residues 76–107 (VSAEELVRQRGALERTEKMVDKMEQDLKTSQK). 2 disordered regions span residues 127–147 (PAETPSAQNGTLTPQPSGRLK) and 161–188 (QASHPNLRKLQDSDSIPGGAGSAVSSEA). Phosphothreonine occurs at positions 130 and 137. The span at 131–142 (PSAQNGTLTPQP) shows a compositional bias: polar residues. A phosphoserine mark is found at S163, S182, S185, S204, and S210. The t-SNARE coiled-coil homology domain occupies 196 to 258 (RACHQRIDSN…TSTERKVRQL (63 aa)).

Belongs to the SNAP-25 family. As to quaternary structure, forms a SNARE complex, composed of VAMP8, SNAP29 and STX17, involved in fusion of autophagosome with lysosome. Interacts with multiple syntaxins including STX6. Interacts with EIPR1. Interacts with STX17; this interaction is increased in the absence of TMEM39A.

The protein localises to the cytoplasm. It is found in the golgi apparatus membrane. Its subcellular location is the cytoplasmic vesicle. The protein resides in the autophagosome membrane. It localises to the cell projection. The protein localises to the cilium membrane. SNAREs, soluble N-ethylmaleimide-sensitive factor-attachment protein receptors, are essential proteins for fusion of cellular membranes. SNAREs localized on opposing membranes assemble to form a trans-SNARE complex, an extended, parallel four alpha-helical bundle that drives membrane fusion. SNAP29 is a SNARE involved in autophagy through the direct control of autophagosome membrane fusion with the lysososome membrane. Also plays a role in ciliogenesis by regulating membrane fusions. The chain is Synaptosomal-associated protein 29 from Bos taurus (Bovine).